A 477-amino-acid polypeptide reads, in one-letter code: Bifunctional protein HldE (477 aa).

Positions 1-318 are ribokinase; the sequence is MKVTLPEFER…ENAVRGRADT (318 aa). Lys179 carries the post-translational modification N6-acetyllysine. Residue 195–198 participates in ATP binding; sequence NLSE. Residue Asp264 is part of the active site. The interval 344-477 is cytidylyltransferase; sequence MTNGVFDILH…IKKIQLDKKG (134 aa).

It in the N-terminal section; belongs to the carbohydrate kinase PfkB family. In the C-terminal section; belongs to the cytidylyltransferase family. Homodimer.

It carries out the reaction D-glycero-beta-D-manno-heptose 7-phosphate + ATP = D-glycero-beta-D-manno-heptose 1,7-bisphosphate + ADP + H(+). The enzyme catalyses D-glycero-beta-D-manno-heptose 1-phosphate + ATP + H(+) = ADP-D-glycero-beta-D-manno-heptose + diphosphate. Its pathway is nucleotide-sugar biosynthesis; ADP-L-glycero-beta-D-manno-heptose biosynthesis; ADP-L-glycero-beta-D-manno-heptose from D-glycero-beta-D-manno-heptose 7-phosphate: step 1/4. The protein operates within nucleotide-sugar biosynthesis; ADP-L-glycero-beta-D-manno-heptose biosynthesis; ADP-L-glycero-beta-D-manno-heptose from D-glycero-beta-D-manno-heptose 7-phosphate: step 3/4. Functionally, catalyzes the phosphorylation of D-glycero-D-manno-heptose 7-phosphate at the C-1 position to selectively form D-glycero-beta-D-manno-heptose-1,7-bisphosphate. Catalyzes the ADP transfer from ATP to D-glycero-beta-D-manno-heptose 1-phosphate, yielding ADP-D-glycero-beta-D-manno-heptose. This is Bifunctional protein HldE from Escherichia coli O81 (strain ED1a).